A 416-amino-acid polypeptide reads, in one-letter code: MAGNLLRGPPLLLRASDKYPRTPKCARCRNHGVVSALKGHKRYCRWKDCMCAKCTLIAERQRVMAAQVALRRQQAQEENEVRELQLLYGTAEGLALAAANGIIPPRPNYEVFGSVSSESNSDSSVQKFETFSKGQLSGPTTPQQAAGKSASAESDSAPGMSSPDGRHGGSGSENGDSESFINSPVSKPLKDGGETPGSVSSIGSDSGSETDKDEQEPSPSSAASRHMNAIDILTRVFPSHKRSILELVLQGCGKDVVQAIEQILNNSGAQGSNKAGPDEGWTAERMLQGAQQPPPPPAASTAPTRPLLPGAMTLSNRSAFSPLQPNTPHFGADPSTYPLGTHLGLNPLRLAYSAHGRGLAFMTPYSTTGLMPTLGFRPPMDYAFSDLIRDRTMLHKEQGYSGGLYGPLVNNTTEKQ.

The DM DNA-binding region spans C25–R72. Residues F131–S154 are compositionally biased toward polar residues. A disordered region spans residues F131–H226. The segment covering G197–G207 has biased composition (low complexity). The region spanning M227–Q262 is the DMA domain.

This sequence belongs to the DMRT family.

The protein resides in the nucleus. In terms of biological role, may be involved in sexual development. In Takifugu rubripes (Japanese pufferfish), this protein is Doublesex- and mab-3-related transcription factor A2 (dmrta2).